A 276-amino-acid polypeptide reads, in one-letter code: Anamorsin homolog (276 aa).

The segment at 1–152 is N-terminal SAM-like domain; the sequence is MEPYVVDNLN…TRGSSIKLPW (152 aa). The tract at residues 152 to 189 is linker; sequence WAHSDIEAAWENVDNETSYDVDKNLINTNSLLQKSDYV. [2Fe-2S] cluster is bound by residues Cys195, Cys211, Cys214, and Cys216. The segment at 195–216 is fe-S binding site A; that stretch reads CGQEFAKNSIGKRKRACKNCTC. [4Fe-4S] cluster contacts are provided by Cys237, Cys240, Cys248, and Cys251. 2 consecutive short sequence motifs (cx2C motif) follow at residues 237–240 and 248–251; these read CGNC and CSTC. The fe-S binding site B stretch occupies residues 237-251; it reads CGNCYLGDAFRCSTC.

This sequence belongs to the anamorsin family. As to quaternary structure, monomer. [2Fe-2S] cluster is required as a cofactor. Requires [4Fe-4S] cluster as cofactor.

It localises to the cytoplasm. The protein resides in the mitochondrion intermembrane space. Component of the cytosolic iron-sulfur (Fe-S) protein assembly (CIA) machinery. Required for the maturation of extramitochondrial Fe-S proteins. Part of an electron transfer chain functioning in an early step of cytosolic Fe-S biogenesis, facilitating the de novo assembly of a [4Fe-4S] cluster on the cytosolic Fe-S scaffold complex. Electrons are transferred from NADPH via a FAD- and FMN-containing diflavin oxidoreductase. Together with the diflavin oxidoreductase, also required for the assembly of the diferric tyrosyl radical cofactor of ribonucleotide reductase (RNR), probably by providing electrons for reduction during radical cofactor maturation in the catalytic small subunit. The protein is Anamorsin homolog of Schistosoma japonicum (Blood fluke).